Here is a 1050-residue protein sequence, read N- to C-terminus: Probable efflux pump membrane transporter TtgB (1050 aa).

12 helical membrane-spanning segments follow: residues 10 to 30, 339 to 359, 370 to 390, 393 to 413, 440 to 460, 472 to 492, 539 to 559, 871 to 891, 893 to 913, 923 to 943, 972 to 992, and 1004 to 1024; these read IFAW…ILKL, GVIH…YLFL, MTVP…GFSI, LTMF…IVVV, GALV…AFFG, ITIV…TPAL, VPFL…FARI, MPAL…ALYE, WSIP…ALIA, VYFL…AILI, IIMT…ASGA, and VIGG…LFFV.

The protein belongs to the resistance-nodulation-cell division (RND) (TC 2.A.6) family.

The protein localises to the cell inner membrane. In terms of biological role, probable membrane transporter component of the TtgABC efflux pump with unknown specificity. In Pseudomonas putida (strain ATCC 47054 / DSM 6125 / CFBP 8728 / NCIMB 11950 / KT2440), this protein is Probable efflux pump membrane transporter TtgB (ttgB).